The primary structure comprises 155 residues: SsrA-binding protein (155 aa).

Belongs to the SmpB family.

The protein resides in the cytoplasm. Its function is as follows. Required for rescue of stalled ribosomes mediated by trans-translation. Binds to transfer-messenger RNA (tmRNA), required for stable association of tmRNA with ribosomes. tmRNA and SmpB together mimic tRNA shape, replacing the anticodon stem-loop with SmpB. tmRNA is encoded by the ssrA gene; the 2 termini fold to resemble tRNA(Ala) and it encodes a 'tag peptide', a short internal open reading frame. During trans-translation Ala-aminoacylated tmRNA acts like a tRNA, entering the A-site of stalled ribosomes, displacing the stalled mRNA. The ribosome then switches to translate the ORF on the tmRNA; the nascent peptide is terminated with the 'tag peptide' encoded by the tmRNA and targeted for degradation. The ribosome is freed to recommence translation, which seems to be the essential function of trans-translation. This chain is SsrA-binding protein, found in Bacillus cereus (strain B4264).